The chain runs to 232 residues: Small ribosomal subunit protein uS2 (232 aa).

It belongs to the universal ribosomal protein uS2 family.

The protein is Small ribosomal subunit protein uS2 of Desulforamulus reducens (strain ATCC BAA-1160 / DSM 100696 / MI-1) (Desulfotomaculum reducens).